Here is a 192-residue protein sequence, read N- to C-terminus: Molybdenum cofactor guanylyltransferase (192 aa).

Residues 10–12 (LAG), lysine 23, asparagine 51, aspartate 69, and aspartate 99 each bind GTP. Aspartate 99 contributes to the Mg(2+) binding site.

This sequence belongs to the MobA family. In terms of assembly, monomer. Requires Mg(2+) as cofactor.

It localises to the cytoplasm. The enzyme catalyses Mo-molybdopterin + GTP + H(+) = Mo-molybdopterin guanine dinucleotide + diphosphate. Transfers a GMP moiety from GTP to Mo-molybdopterin (Mo-MPT) cofactor (Moco or molybdenum cofactor) to form Mo-molybdopterin guanine dinucleotide (Mo-MGD) cofactor. The protein is Molybdenum cofactor guanylyltransferase of Haemophilus influenzae (strain 86-028NP).